A 126-amino-acid polypeptide reads, in one-letter code: Aspartate 1-decarboxylase (126 aa).

The active-site Schiff-base intermediate with substrate; via pyruvic acid is Ser-25. Ser-25 carries the post-translational modification Pyruvic acid (Ser). Residue Thr-57 coordinates substrate. Catalysis depends on Tyr-58, which acts as the Proton donor. Substrate is bound at residue 73–75 (GAA).

The protein belongs to the PanD family. In terms of assembly, heterooctamer of four alpha and four beta subunits. It depends on pyruvate as a cofactor. Post-translationally, is synthesized initially as an inactive proenzyme, which is activated by self-cleavage at a specific serine bond to produce a beta-subunit with a hydroxyl group at its C-terminus and an alpha-subunit with a pyruvoyl group at its N-terminus.

It localises to the cytoplasm. It catalyses the reaction L-aspartate + H(+) = beta-alanine + CO2. It participates in cofactor biosynthesis; (R)-pantothenate biosynthesis; beta-alanine from L-aspartate: step 1/1. In terms of biological role, catalyzes the pyruvoyl-dependent decarboxylation of aspartate to produce beta-alanine. This chain is Aspartate 1-decarboxylase, found in Halorhodospira halophila (strain DSM 244 / SL1) (Ectothiorhodospira halophila (strain DSM 244 / SL1)).